A 161-amino-acid polypeptide reads, in one-letter code: Nucleotide-binding protein Pput_4372 (161 aa).

Belongs to the YajQ family.

Its function is as follows. Nucleotide-binding protein. This Pseudomonas putida (strain ATCC 700007 / DSM 6899 / JCM 31910 / BCRC 17059 / LMG 24140 / F1) protein is Nucleotide-binding protein Pput_4372.